A 358-amino-acid chain; its full sequence is Aminodeoxyfutalosine deaminase (358 aa).

The Zn(2+) site is built by His32 and His34. Substrate is bound by residues Arg87, Asp154, and Gly188. Position 215 (His215) interacts with Zn(2+). Glu218 serves as the catalytic Proton donor. Asp296 lines the Zn(2+) pocket.

Belongs to the metallo-dependent hydrolases superfamily. Adenosine and AMP deaminases family. Requires Zn(2+) as cofactor.

It carries out the reaction 6-amino-6-deoxyfutalosine + H2O + H(+) = futalosine + NH4(+). The protein operates within quinol/quinone metabolism; menaquinone biosynthesis. Functionally, catalyzes the deamination of aminodeoxyfutalosine (AFL) into futalosine (FL), a step in the biosynthesis of menaquinone (MK, vitamin K2). To a lesser extent, can also deaminate adenosine, 5'-methylthioadenosine, 5'-deoxyadenosine, and 2'-deoxyadenosine. This Streptomyces avermitilis (strain ATCC 31267 / DSM 46492 / JCM 5070 / NBRC 14893 / NCIMB 12804 / NRRL 8165 / MA-4680) protein is Aminodeoxyfutalosine deaminase (add2).